Consider the following 219-residue polypeptide: Uracil-DNA glycosylase (219 aa).

The Proton acceptor role is filled by aspartate 61.

It belongs to the uracil-DNA glycosylase (UDG) superfamily. UNG family.

The protein localises to the cytoplasm. It catalyses the reaction Hydrolyzes single-stranded DNA or mismatched double-stranded DNA and polynucleotides, releasing free uracil.. Functionally, excises uracil residues from the DNA which can arise as a result of misincorporation of dUMP residues by DNA polymerase or due to deamination of cytosine. The protein is Uracil-DNA glycosylase of Exiguobacterium sibiricum (strain DSM 17290 / CCUG 55495 / CIP 109462 / JCM 13490 / 255-15).